The following is a 429-amino-acid chain: 3-phosphoshikimate 1-carboxyvinyltransferase (429 aa).

The 3-phosphoshikimate site is built by K23, S24, and R28. Phosphoenolpyruvate is bound at residue K23. Residues G95 and R123 each coordinate phosphoenolpyruvate. S168, Q170, D316, and K343 together coordinate 3-phosphoshikimate. Phosphoenolpyruvate is bound at residue Q170. Residue D316 is the Proton acceptor of the active site. R347 and R389 together coordinate phosphoenolpyruvate.

This sequence belongs to the EPSP synthase family. As to quaternary structure, monomer.

It is found in the cytoplasm. It carries out the reaction 3-phosphoshikimate + phosphoenolpyruvate = 5-O-(1-carboxyvinyl)-3-phosphoshikimate + phosphate. Its pathway is metabolic intermediate biosynthesis; chorismate biosynthesis; chorismate from D-erythrose 4-phosphate and phosphoenolpyruvate: step 6/7. Catalyzes the transfer of the enolpyruvyl moiety of phosphoenolpyruvate (PEP) to the 5-hydroxyl of shikimate-3-phosphate (S3P) to produce enolpyruvyl shikimate-3-phosphate and inorganic phosphate. The chain is 3-phosphoshikimate 1-carboxyvinyltransferase from Bacillus cereus (strain ZK / E33L).